We begin with the raw amino-acid sequence, 448 residues long: MTSSVDKVSQKVADVKLGSSKSTKNNKSKGKGKSNKNQVVEDDDEDDFEKALELAMQLDAQKLAQKKADDVPLVEEEEKKVEEKIEQQYDPISTFYPDGNYPQGEVVDYKDDNLYRTTDEEKRALDREKNNKWNEFRKGAEIHRRVRKLAKDEIKPGMSMIEIAELIENAVRGYSGEDGLKGGMGFPCGLSLNHCAAHYSPNANDKLVLNYEDVMKVDFGVHVNGHIIDSAFTLTFDDKYDDLLKAVKDATNTGIREAGIDVRLTDIGEAIQEVMESYEVTLDGETYQVKPIKNLCGHNIGQYRIHGGKSVPIVKNFDNTKMEEGETFAIETFGSTGRGHVIGQGECSHYAKNPDAPANAISSIRVNRAKQLLKTIDENFGTLPFCRRYIDRLGEEKYLLALNQLVKSGVVSDYPPLVDVKGSYTAQYEHTILLRPNVKEVVSRGEDY.

A disordered region spans residues 1–47; the sequence is MTSSVDKVSQKVADVKLGSSKSTKNNKSKGKGKSNKNQVVEDDDEDD. The span at 24 to 34 shows a compositional bias: basic residues; it reads KNNKSKGKGKS. Residue histidine 198 participates in substrate binding. A divalent metal cation contacts are provided by aspartate 218, aspartate 229, and histidine 298. Residue histidine 306 coordinates substrate. Positions 331 and 429 each coordinate a divalent metal cation.

The protein belongs to the peptidase M24A family. Methionine aminopeptidase eukaryotic type 2 subfamily. Requires Co(2+) as cofactor. Zn(2+) is required as a cofactor. Mn(2+) serves as cofactor. The cofactor is Fe(2+).

It localises to the cytoplasm. The catalysed reaction is Release of N-terminal amino acids, preferentially methionine, from peptides and arylamides.. Functionally, cotranslationally removes the N-terminal methionine from nascent proteins. The N-terminal methionine is often cleaved when the second residue in the primary sequence is small and uncharged (Met-Ala-, Cys, Gly, Pro, Ser, Thr, or Val). The polypeptide is Methionine aminopeptidase 2 (Komagataella phaffii (strain GS115 / ATCC 20864) (Yeast)).